A 419-amino-acid polypeptide reads, in one-letter code: Hyaluronan synthase (419 aa).

The next 5 membrane-spanning stretches (helical) occupy residues 8 to 28 (LIVL…MYLF), 33 to 53 (VGIY…LSFL), 318 to 338 (IVAL…VAIG), 345 to 365 (AIQL…IVAL), and 376 to 396 (PASF…LQPL).

Belongs to the NodC/HAS family. Requires Mg(2+) as cofactor.

The protein localises to the cell membrane. It catalyses the reaction [hyaluronan](n) + UDP-N-acetyl-alpha-D-glucosamine = N-acetyl-beta-D-glucosaminyl-(1-&gt;4)-[hyaluronan](n) + UDP + H(+). The catalysed reaction is N-acetyl-beta-D-glucosaminyl-(1-&gt;4)-[hyaluronan](n) + UDP-alpha-D-glucuronate = [hyaluronan](n+1) + UDP + H(+). It participates in glycan biosynthesis; hyaluronan biosynthesis. Its function is as follows. Glycosaminoglycan synthesis. The hyaluronic acid capsule is involved in the pathogenicity of group A Streptococci; it may be the major virulence determinant. The polypeptide is Hyaluronan synthase (hasA) (Streptococcus pyogenes serotype M6 (strain ATCC BAA-946 / MGAS10394)).